The following is a 212-amino-acid chain: Pyridoxine/pyridoxamine 5'-phosphate oxidase (212 aa).

Substrate-binding positions include 8-11 (RREY) and Lys-66. FMN-binding positions include 61–66 (RIVLLK), 76–77 (FT), Arg-82, Lys-83, and Gln-105. Residues Tyr-123, Arg-127, and Ser-131 each contribute to the substrate site. FMN contacts are provided by residues 140–141 (QS) and Trp-185. 191–193 (RLH) is a binding site for substrate. Arg-195 is a binding site for FMN.

Belongs to the pyridoxamine 5'-phosphate oxidase family. Homodimer. FMN is required as a cofactor.

It catalyses the reaction pyridoxamine 5'-phosphate + O2 + H2O = pyridoxal 5'-phosphate + H2O2 + NH4(+). The enzyme catalyses pyridoxine 5'-phosphate + O2 = pyridoxal 5'-phosphate + H2O2. The protein operates within cofactor metabolism; pyridoxal 5'-phosphate salvage; pyridoxal 5'-phosphate from pyridoxamine 5'-phosphate: step 1/1. It functions in the pathway cofactor metabolism; pyridoxal 5'-phosphate salvage; pyridoxal 5'-phosphate from pyridoxine 5'-phosphate: step 1/1. Its function is as follows. Catalyzes the oxidation of either pyridoxine 5'-phosphate (PNP) or pyridoxamine 5'-phosphate (PMP) into pyridoxal 5'-phosphate (PLP). The sequence is that of Pyridoxine/pyridoxamine 5'-phosphate oxidase from Shewanella putrefaciens (strain CN-32 / ATCC BAA-453).